Here is an 858-residue protein sequence, read N- to C-terminus: Protein 4.1 (858 aa).

Residues 1 to 125 (MTTEKSLAAE…KEIELGNSLD (125 aa)) are disordered. Residue Ser-14 is modified to Phosphoserine. Residues 31–50 (QQETQLEEASQAAAAEGSDQ) are compositionally biased toward low complexity. Thr-62 bears the Phosphothreonine mark. The span at 63–77 (PTHEDLTKNKERTSE) shows a compositional bias: basic and acidic residues. Over residues 78–89 (SRGLSRLLSSFL) the composition is skewed to low complexity. A phosphoserine mark is found at Ser-86, Ser-87, Ser-97, Ser-106, Ser-123, Ser-151, Ser-153, and Ser-154. A compositionally biased stretch (basic and acidic residues) spans 103-119 (EVESEKEKGEGGQKEIE). A disordered region spans residues 155–208 (IETQPAQEEHREDPDSETKEGEGIEECSGTEVKEDPESRAEREPEASQKPVRRH). Composition is skewed to basic and acidic residues over residues 161 to 176 (QEEH…KEGE) and 185 to 200 (EVKE…EPEA). Ser-192 is modified (phosphoserine). An FERM domain is found at 211-492 (MHCKVSLLDD…EHHTFFRLTS (282 aa)). Tyr-223 carries the phosphotyrosine modification. Thr-379 carries the phosphothreonine modification. Residues 495 to 608 (TIPKSKFLAL…PAEPEPTEAW (114 aa)) form a hydrophilic region. Residues 518–636 (TRQASALIDR…TQKLAGKGED (119 aa)) form a disordered region. A phosphoserine mark is found at Ser-522, Ser-541, Ser-543, and Ser-556. Composition is skewed to basic and acidic residues over residues 581-595 (TPKE…RGEE) and 606-615 (EAWKVEKTHT). The tract at residues 609–707 (KVEKTHTEVT…WDKRLSTHSP (99 aa)) is spectrin--actin-binding. Over residues 616–629 (EVTVPTSNGDQTQK) the composition is skewed to polar residues. The residue at position 654 (Tyr-654) is a Phosphotyrosine. A phosphoserine mark is found at Ser-658, Ser-668, Ser-678, Ser-703, and Ser-706. Residues 710 to 858 (TLNINGQVPT…VHQETEISEE (149 aa)) form a C-terminal (CTD) region. Residues Thr-730 and Thr-853 each carry the phosphothreonine modification.

Binds with a high affinity to glycophorin and with lower affinity to band III protein. Associates with the nuclear mitotic apparatus. Binds calmodulin, CPAP and DLG1. Also found to associate with contractile apparatus and tight junctions. Interacts with NUMA1; this interaction is negatively regulated by CDK1 during metaphase and promotes anaphase-specific localization of NUMA1 in symmetrically dividing cells. Interacts with ATP2B1; regulates small intestinal calcium absorption through regulation of membrane expression of ATP2B1. In terms of processing, O-glycosylated; contains N-acetylglucosamine side chains in the C-terminal domain. Post-translationally, phosphorylated at multiple sites by different protein kinases and each phosphorylation event selectively modulates the protein's functions. Phosphorylation on Tyr-654 reduces the ability of 4.1 to promote the assembly of the spectrin/actin/4.1 ternary complex.

Its subcellular location is the nucleus. The protein resides in the cytoplasm. It is found in the cytoskeleton. The protein localises to the cell cortex. Protein 4.1 is a major structural element of the erythrocyte membrane skeleton. It plays a key role in regulating membrane physical properties of mechanical stability and deformability by stabilizing spectrin-actin interaction. Recruits DLG1 to membranes. Required for dynein-dynactin complex and NUMA1 recruitment at the mitotic cell cortex during anaphase. The chain is Protein 4.1 from Mus musculus (Mouse).